The chain runs to 259 residues: NAD kinase (259 aa).

Asp-43 functions as the Proton acceptor in the catalytic mechanism. Residues 43 to 44, 111 to 112, and Arg-136 each bind NAD(+); these read DG and NE.

It belongs to the NAD kinase family. A divalent metal cation serves as cofactor.

It localises to the cytoplasm. The catalysed reaction is NAD(+) + ATP = ADP + NADP(+) + H(+). Its function is as follows. Involved in the regulation of the intracellular balance of NAD and NADP, and is a key enzyme in the biosynthesis of NADP. Catalyzes specifically the phosphorylation on 2'-hydroxyl of the adenosine moiety of NAD to yield NADP. In Mycoplasma genitalium (strain ATCC 33530 / DSM 19775 / NCTC 10195 / G37) (Mycoplasmoides genitalium), this protein is NAD kinase.